Reading from the N-terminus, the 239-residue chain is DNA repair protein RecO (239 aa).

It belongs to the RecO family.

Its function is as follows. Involved in DNA repair and RecF pathway recombination. In Stenotrophomonas maltophilia (strain R551-3), this protein is DNA repair protein RecO.